Here is a 1094-residue protein sequence, read N- to C-terminus: MATEAAPPRIAVRLPSTSVRDAGANYRIARYVAVVAGLLGAVLAIATPLLPVNQTTAQLNWPQNGTFASVEAPLIGYVATDLNITVPCQAAAGLAGSQNTGKTVLLSTVPKQAPKAVDRGLLLQRANDDLVLVVRNVPLVTAPLSQVLGPTCQRLTFTAHADRVAAEFVGLVQGPNAEHPGAPLRGERSGYDFRPQIVGVFTDLAGPAPPGLSFSASVDTRYSSSPTPLKMAAMILGVALTGAALVALHILDTADGMRHRRFLPARWWSTGGLDTLVIAVLVWWHFVGANTSDDGYILTMARVSEHAGYMANYYRWFGTPEAPFGWYYDLLALWAHVSTASIWMRLPTLAMALTCWWVISREVIPRLGHAVKTSRAAAWTAAGMFLAVWLPLDNGLRPEPIIALGILLTWCSVERAVATSRLLPVAIACIIGALTLFSGPTGIASIGALLVAIGPLRTILHRRSRRFGVLPLVAPILAAATVTAIPIFRDQTFAGEIQANLLKRAVGPSLKWFDEHIRYERLFMASPDGSIARRFAVLALVLALAVSVAMSLRKGRIPGTAAGPSRRIIGITIISFLAMMFTPTKWTHHFGVFAGLAGSLGALAAVAVTGAAMRSRRNRTVFAAVVVFVLALSFASVNGWWYVSNFGVPWSNSFPKWRWSLTTALLELTVLVLLLAAWFHFVANGDGRRTARPTRFRARLAGIVQSPLAIATWLLVLFEVVSLTQAMISQYPAWSVGRSNLQALAGKTCGLAEDVLVELDPNAGMLAPVTAPLADALGAGLSEAFTPNGIPADVTADPVMERPGDRSFLNDDGLITGSEPGTEGGTTAAPGINGSRARLPYNLDPARTPVLGSWRAGVQVPAMLRSGWYRLPTNEQRDRAPLLVVTAAGRFDSREVRLQWATDEQAAAGHHGGSMEFADVGAAPAWRNLRAPLSAIPSTATQVRLVADDQDLAPQHWIALTPPRIPRVRTLQNVVGAADPVFLDWLVGLAFPCQRPFGHQYGVDETPKWRILPDRFGAEANSPVMDHNGGGPLGITELLMRATTVASYLKDDWFRDWGALQRLTPYYPDAQPADLNLGTVTRSGLWSPAPLRRG.

The next 13 helical transmembrane spans lie at 28–50 (IARY…TPLL), 232–251 (AAMI…LHIL), 264–286 (PARW…WWHF), 341–360 (SIWM…WVIS), 373–392 (TSRA…WLPL), 431–453 (IGAL…LVAI), 466–488 (RFGV…IPIF), 530–552 (SIAR…AMSL), 565–582 (SRRI…MMFT), 586–608 (WTHH…AVAV), 620–642 (TVFA…GWWY), 657–679 (WRWS…AAWF), and 700–722 (LAGI…EVVS). Positions 817-831 (GSEPGTEGGTTAAPG) are enriched in low complexity. Residues 817-836 (GSEPGTEGGTTAAPGINGSR) are disordered.

This sequence belongs to the emb family.

Its subcellular location is the cell membrane. In terms of biological role, arabinosyl transferase responsible for the polymerization of arabinose into the arabinan of arabinogalactan. The sequence is that of Probable arabinosyltransferase C (embC) from Mycobacterium tuberculosis (strain ATCC 25618 / H37Rv).